The chain runs to 375 residues: Growth/differentiation factor 8 (375 aa).

A signal peptide spans 1-23 (MQKLQLCVYIYLFMLIVAGPVDL). The propeptide occupies 24 to 266 (NENSEQKENV…VTDTPKRSRR (243 aa)). The N-linked (GlcNAc...) asparagine glycan is linked to Asn71. Cystine bridges form between Cys272–Cys282, Cys281–Cys340, Cys309–Cys372, and Cys313–Cys374.

It belongs to the TGF-beta family. In terms of assembly, homodimer; disulfide-linked. Interacts with WFIKKN2, leading to inhibit its activity. Interacts with FSTL3. Post-translationally, synthesized as large precursor molecule that undergoes proteolytic cleavage to generate an N-terminal propeptide and a disulfide linked C-terminal dimer, which is the biologically active molecule. The circulating form consists of a latent complex of the C-terminal dimer and other proteins, including its propeptide, which maintain the C-terminal dimer in a latent, inactive state. Ligand activation requires additional cleavage of the prodomain by a tolloid-like metalloproteinase.

It is found in the secreted. Acts specifically as a negative regulator of skeletal muscle growth. The sequence is that of Growth/differentiation factor 8 (MSTN) from Papio hamadryas (Hamadryas baboon).